A 319-amino-acid chain; its full sequence is MGFNINIIGTGGTRPLHNRYLSSVLIEYNGDNFLFDCGEGTQMSLRKQKISWQKIKMICITHLHADHITGLLGIVMLMSQSGETRKDPLIIAGPVGIKNYTKNNIDMLKIYTNYEIIYKEIIIDKTEKIIYEDKTKKIEYTRLKHSIECVGYLFIEKDKPGKFNTEKAEELNIPKGPIRKTLQDGKEILINGKIIKPSEILGKSKKGLKVAYITDTGYFKELIQQIKNFNLVIIESTFKNELKKEADKKLHLTAGGAANIVKQAKVLQTGLIHFSERYTLRKDLENLLKEAKLEYPDGEIFLTKDGMRLEANKNNFIIK.

7 residues coordinate Zn(2+): H62, H64, D66, H67, H145, D215, and H273. The active-site Proton acceptor is D66.

This sequence belongs to the RNase Z family. Homodimer. Requires Zn(2+) as cofactor.

It carries out the reaction Endonucleolytic cleavage of RNA, removing extra 3' nucleotides from tRNA precursor, generating 3' termini of tRNAs. A 3'-hydroxy group is left at the tRNA terminus and a 5'-phosphoryl group is left at the trailer molecule.. Zinc phosphodiesterase, which displays some tRNA 3'-processing endonuclease activity. Probably involved in tRNA maturation, by removing a 3'-trailer from precursor tRNA. The polypeptide is Ribonuclease Z (Borreliella afzelii (strain PKo) (Borrelia afzelii)).